The sequence spans 144 residues: Large ribosomal subunit protein uL15 (144 aa).

A disordered region spans residues 1–51 (MRLNTIKPGAGSKSAGKRVGRGIGSGLGKTCGRGHKGQKSRAGGFHKVGFE). Gly residues predominate over residues 21–31 (RGIGSGLGKTC).

It belongs to the universal ribosomal protein uL15 family. In terms of assembly, part of the 50S ribosomal subunit.

Its function is as follows. Binds to the 23S rRNA. This chain is Large ribosomal subunit protein uL15, found in Azoarcus sp. (strain BH72).